A 385-amino-acid chain; its full sequence is 8-amino-7-oxononanoate synthase (385 aa).

A substrate-binding site is contributed by Arg-21. 108-109 serves as a coordination point for pyridoxal 5'-phosphate; sequence GF. His-133 serves as a coordination point for substrate. Residues Ser-179, His-207, and Thr-233 each coordinate pyridoxal 5'-phosphate. An N6-(pyridoxal phosphate)lysine modification is found at Lys-236. Residue Thr-352 coordinates substrate.

The protein belongs to the class-II pyridoxal-phosphate-dependent aminotransferase family. BioF subfamily. Homodimer. The cofactor is pyridoxal 5'-phosphate.

The enzyme catalyses 6-carboxyhexanoyl-[ACP] + L-alanine + H(+) = (8S)-8-amino-7-oxononanoate + holo-[ACP] + CO2. Its pathway is cofactor biosynthesis; biotin biosynthesis. Functionally, catalyzes the decarboxylative condensation of pimeloyl-[acyl-carrier protein] and L-alanine to produce 8-amino-7-oxononanoate (AON), [acyl-carrier protein], and carbon dioxide. In Salmonella enteritidis PT4 (strain P125109), this protein is 8-amino-7-oxononanoate synthase.